A 134-amino-acid polypeptide reads, in one-letter code: Large ribosomal subunit protein bL20 (134 aa).

The protein belongs to the bacterial ribosomal protein bL20 family.

In terms of biological role, binds directly to 23S ribosomal RNA and is necessary for the in vitro assembly process of the 50S ribosomal subunit. It is not involved in the protein synthesizing functions of that subunit. This Rhizobium etli (strain CIAT 652) protein is Large ribosomal subunit protein bL20.